The primary structure comprises 705 residues: Elongation factor G 2 (705 aa).

In terms of domain architecture, tr-type G spans 8–290 (ELYRNIGISA…AVLDYLPSPL (283 aa)). Residues 17–24 (AHIDAGKT), 88–92 (DTPGH), and 142–145 (NKMD) each bind GTP.

It belongs to the TRAFAC class translation factor GTPase superfamily. Classic translation factor GTPase family. EF-G/EF-2 subfamily.

It localises to the cytoplasm. Functionally, catalyzes the GTP-dependent ribosomal translocation step during translation elongation. During this step, the ribosome changes from the pre-translocational (PRE) to the post-translocational (POST) state as the newly formed A-site-bound peptidyl-tRNA and P-site-bound deacylated tRNA move to the P and E sites, respectively. Catalyzes the coordinated movement of the two tRNA molecules, the mRNA and conformational changes in the ribosome. The sequence is that of Elongation factor G 2 from Bordetella avium (strain 197N).